Reading from the N-terminus, the 135-residue chain is Galectin-1 (135 aa).

Alanine 2 bears the N-acetylalanine mark. A Galectin domain is found at 4-135 (GLVASNLNLK…DFKIKCVAFD (132 aa)). N6-acetyllysine occurs at positions 13 and 29. Serine 30 is subject to Phosphoserine; by FAM20C. A beta-D-galactoside is bound by residues 45-49 (HFNPR), histidine 53, asparagine 62, and 69-72 (WGTE). Lysine 108 is modified (N6-acetyllysine; alternate). Lysine 108 carries the post-translational modification N6-succinyllysine; alternate. Lysine 128 bears the N6-acetyllysine mark.

In terms of assembly, homodimer. Binds LGALS3BP. Interacts with CD2, CD3, CD4, CD6, CD7, CD43, ALCAM and CD45. Interacts with laminin (via poly-N-acetyllactosamine). Interacts with SUSD2. Interacts with cargo receptor TMED10; the interaction mediates the translocation from the cytoplasm into the ERGIC (endoplasmic reticulum-Golgi intermediate compartment) and thereby secretion. Interacts with CD69. As to expression, expressed in placenta, maternal decidua and fetal membranes. Within placenta, expressed in trophoblasts, stromal cells, villous endothelium, syncytiotrophoblast apical membrane and villous stroma. Within fetal membranes, expressed in amnion, chorioamniotic mesenchyma and chorion (at protein level). Expressed in cardiac, smooth, and skeletal muscle, neurons, thymus, kidney and hematopoietic cells.

The protein resides in the secreted. Its subcellular location is the extracellular space. The protein localises to the extracellular matrix. It is found in the cytoplasm. Its function is as follows. Lectin that binds beta-galactoside and a wide array of complex carbohydrates. Plays a role in regulating apoptosis, cell proliferation and cell differentiation. Inhibits CD45 protein phosphatase activity and therefore the dephosphorylation of Lyn kinase. Strong inducer of T-cell apoptosis. Plays a negative role in Th17 cell differentiation via activation of the receptor CD69. The polypeptide is Galectin-1 (Homo sapiens (Human)).